Here is a 129-residue protein sequence, read N- to C-terminus: Ribosome-binding factor A (129 aa).

Belongs to the RbfA family. Monomer. Binds 30S ribosomal subunits, but not 50S ribosomal subunits or 70S ribosomes.

It localises to the cytoplasm. Its function is as follows. One of several proteins that assist in the late maturation steps of the functional core of the 30S ribosomal subunit. Associates with free 30S ribosomal subunits (but not with 30S subunits that are part of 70S ribosomes or polysomes). Required for efficient processing of 16S rRNA. May interact with the 5'-terminal helix region of 16S rRNA. The protein is Ribosome-binding factor A of Azotobacter vinelandii (strain DJ / ATCC BAA-1303).